Consider the following 1169-residue polypeptide: Transcription-repair-coupling factor (1169 aa).

Positions 634–795 (DMERERPMDR…MLGVRDLSVI (162 aa)) constitute a Helicase ATP-binding domain. Position 647–654 (647–654 (GDVGYGKT)) interacts with ATP. The DEEQ box motif lies at 748 to 751 (DEEQ). Residues 809–970 (VLEQNSNFIK…GFKIAMRDLN (162 aa)) form the Helicase C-terminal domain.

The protein in the N-terminal section; belongs to the UvrB family. In the C-terminal section; belongs to the helicase family. RecG subfamily.

It localises to the cytoplasm. In terms of biological role, couples transcription and DNA repair by recognizing RNA polymerase (RNAP) stalled at DNA lesions. Mediates ATP-dependent release of RNAP and its truncated transcript from the DNA, and recruitment of nucleotide excision repair machinery to the damaged site. In Staphylococcus haemolyticus (strain JCSC1435), this protein is Transcription-repair-coupling factor.